The following is a 96-amino-acid chain: Dynein light chain roadblock-type 1 (96 aa).

Alanine 2 carries the N-acetylalanine modification.

The protein belongs to the GAMAD family. Homodimer. The cytoplasmic dynein 1 complex consists of two catalytic heavy chains (HCs) and a number of non-catalytic subunits presented by intermediate chains (ICs), light intermediate chains (LICs) and light chains (LCs); the composition seems to vary in respect to the IC, LIC and LC composition. The heavy chain homodimer serves as a scaffold for the probable homodimeric assembly of the respective non-catalytic subunits. The ICs and LICs bind directly to the HC dimer and the LCs assemble on the IC dimer. Interacts with DYNLRB2. Interacts with DYNC1I1 and DYNC1I2. Interacts with RAB6A isoform 1 (GTP-bound); the interaction is direct. Interacts with RAB6A isoform 2 (GDP-bound); the interaction is direct. Interacts with RAB6B (GDP-bound).

The protein localises to the cytoplasm. It is found in the cytoskeleton. Functionally, acts as one of several non-catalytic accessory components of the cytoplasmic dynein 1 complex that are thought to be involved in linking dynein to cargos and to adapter proteins that regulate dynein function. Cytoplasmic dynein 1 acts as a motor for the intracellular retrograde motility of vesicles and organelles along microtubules. The sequence is that of Dynein light chain roadblock-type 1 (Dynlrb1) from Mus musculus (Mouse).